Consider the following 94-residue polypeptide: MANERPTSQQRPAGGPRKRRPFQRRKVCRFCAEKNLTIDYKEPRTLRYFITERGKIVPRRISGNCSAHQREITEAIKRARNLALLPIASNHTLP.

A compositionally biased stretch (polar residues) spans 1 to 11; that stretch reads MANERPTSQQR. A disordered region spans residues 1–24; that stretch reads MANERPTSQQRPAGGPRKRRPFQR.

It belongs to the bacterial ribosomal protein bS18 family. As to quaternary structure, part of the 30S ribosomal subunit. Forms a tight heterodimer with protein bS6.

Its function is as follows. Binds as a heterodimer with protein bS6 to the central domain of the 16S rRNA, where it helps stabilize the platform of the 30S subunit. The polypeptide is Small ribosomal subunit protein bS18 (Pelobacter propionicus (strain DSM 2379 / NBRC 103807 / OttBd1)).